The primary structure comprises 579 residues: Nuclear hormone receptor family member nhr-71 (579 aa).

The nuclear receptor DNA-binding region spans 8-83 (SQECMVCSAP…AGMKIGAVQP (76 aa)). 2 NR C4-type zinc fingers span residues 11–31 (CMVC…CRSC) and 47–71 (CKHT…FTKC). Disordered stretches follow at residues 82 to 124 (QPRR…SDGP) and 168 to 189 (EPIP…PNDD). Polar residues-rich tracts occupy residues 106–124 (SMNN…SDGP) and 171–186 (PSTS…QSSP). In terms of domain architecture, NR LBD spans 189 to 452 (DEQQEFNHLV…KFWYETLCYA (264 aa)).

The protein belongs to the nuclear hormone receptor family.

It localises to the nucleus. Orphan nuclear receptor. In Caenorhabditis elegans, this protein is Nuclear hormone receptor family member nhr-71 (nhr-71).